The primary structure comprises 246 residues: Hydroxyacylglutathione hydrolase (246 aa).

Zn(2+) contacts are provided by His58, His60, Asp62, His63, His117, Asp137, and His175.

The protein belongs to the metallo-beta-lactamase superfamily. Glyoxalase II family. Monomer. The cofactor is Zn(2+).

It carries out the reaction an S-(2-hydroxyacyl)glutathione + H2O = a 2-hydroxy carboxylate + glutathione + H(+). It participates in secondary metabolite metabolism; methylglyoxal degradation; (R)-lactate from methylglyoxal: step 2/2. Thiolesterase that catalyzes the hydrolysis of S-D-lactoyl-glutathione to form glutathione and D-lactic acid. The polypeptide is Hydroxyacylglutathione hydrolase (Prochlorococcus marinus (strain MIT 9301)).